Consider the following 90-residue polypeptide: Acylphosphatase (90 aa).

An Acylphosphatase-like domain is found at Asn3–Tyr90. Active-site residues include Arg18 and Asn36.

It belongs to the acylphosphatase family.

The enzyme catalyses an acyl phosphate + H2O = a carboxylate + phosphate + H(+). This is Acylphosphatase (acyP) from Ligilactobacillus salivarius (strain UCC118) (Lactobacillus salivarius).